Here is a 131-residue protein sequence, read N- to C-terminus: Small ribosomal subunit protein uS8 (131 aa).

The protein belongs to the universal ribosomal protein uS8 family. In terms of assembly, part of the 30S ribosomal subunit. Contacts proteins S5 and S12.

One of the primary rRNA binding proteins, it binds directly to 16S rRNA central domain where it helps coordinate assembly of the platform of the 30S subunit. The chain is Small ribosomal subunit protein uS8 from Chlorobium phaeovibrioides (strain DSM 265 / 1930) (Prosthecochloris vibrioformis (strain DSM 265)).